The sequence spans 204 residues: MSERGLLIVLSGPSGVGKGTVRKAIFDSEENDFQYSISMTTRKQREGEVDGVDYYFRSREEFEAMIEAGEMLEYAEYVGNYYGTPLTYVNQTLDEGKDVFLEIEVQGAKQVKDKVPDGVFIFLTPPDLAELKSRIIGRGTDEMSVIEERMAVAREEIEMMALYDYAVVNDEVPLAVQRIKDIIASEHFRVDRVIGKYIKMLEEM.

Residues 5-184 enclose the Guanylate kinase-like domain; it reads GLLIVLSGPS…AVQRIKDIIA (180 aa). 12–19 contributes to the ATP binding site; the sequence is GPSGVGKG.

It belongs to the guanylate kinase family.

The protein resides in the cytoplasm. The catalysed reaction is GMP + ATP = GDP + ADP. Its function is as follows. Essential for recycling GMP and indirectly, cGMP. The sequence is that of Guanylate kinase from Enterococcus faecalis (strain ATCC 700802 / V583).